The sequence spans 593 residues: Uncoordinated protein 58 (593 aa).

Transmembrane regions (helical) follow at residues 186–206, 291–311, 320–340, 402–422, 430–450, and 455–475; these read VILV…LMLL, TFPT…YGEV, VFSV…AADI, PIGA…AMFI, FIHA…GDIV, and IFLS…TMCV.

This sequence belongs to the two pore domain potassium channel (TC 1.A.1.8) family.

Its subcellular location is the membrane. Functionally, has a role in mobility, possibly in the transport of potassium in muscles. This is Uncoordinated protein 58 from Caenorhabditis briggsae.